The chain runs to 143 residues: Peptide methionine sulfoxide reductase MsrB (143 aa).

Residues 16 to 139 (DAELRRRLTP…NSAALNFESR (124 aa)) enclose the MsrB domain. The Zn(2+) site is built by Cys-55, Cys-58, Cys-104, and Cys-107. Cys-128 serves as the catalytic Nucleophile.

This sequence belongs to the MsrB Met sulfoxide reductase family. The cofactor is Zn(2+).

It catalyses the reaction L-methionyl-[protein] + [thioredoxin]-disulfide + H2O = L-methionyl-(R)-S-oxide-[protein] + [thioredoxin]-dithiol. The protein is Peptide methionine sulfoxide reductase MsrB of Burkholderia vietnamiensis (strain G4 / LMG 22486) (Burkholderia cepacia (strain R1808)).